A 201-amino-acid chain; its full sequence is Recombination protein RecR (201 aa).

A C4-type zinc finger spans residues 57–72; sequence CTHCRTFTEEESCAIC. Residues 81–176 form the Toprim domain; that stretch reads GFLCVVEQPS…KVSRIAHGIP (96 aa).

Belongs to the RecR family.

In terms of biological role, may play a role in DNA repair. It seems to be involved in an RecBC-independent recombinational process of DNA repair. It may act with RecF and RecO. The chain is Recombination protein RecR from Histophilus somni (strain 129Pt) (Haemophilus somnus).